The following is a 396-amino-acid chain: Elongation factor Tu (396 aa).

A tr-type G domain is found at 10–206 (KPHVNVGTIG…ALDTYIPTPE (197 aa)). The tract at residues 19 to 26 (GHVDHGKT) is G1. Residue 19-26 (GHVDHGKT) participates in GTP binding. T26 lines the Mg(2+) pocket. Positions 60-64 (GITIN) are G2. Positions 81–84 (DCPG) are G3. GTP contacts are provided by residues 81–85 (DCPGH) and 136–139 (NKCD). A G4 region spans residues 136-139 (NKCD). Residues 174–176 (SAK) are G5.

The protein belongs to the TRAFAC class translation factor GTPase superfamily. Classic translation factor GTPase family. EF-Tu/EF-1A subfamily. In terms of assembly, monomer.

It is found in the cytoplasm. It carries out the reaction GTP + H2O = GDP + phosphate + H(+). GTP hydrolase that promotes the GTP-dependent binding of aminoacyl-tRNA to the A-site of ribosomes during protein biosynthesis. In Thiomonas delicata (Thiomonas cuprina), this protein is Elongation factor Tu.